A 1686-amino-acid polypeptide reads, in one-letter code: A disintegrin and metalloproteinase with thrombospondin motifs 7 (1686 aa).

The N-terminal stretch at 1 to 27 (MPGGPSPRSPAPLLRPLLLLLCALAPG) is a signal peptide. A propeptide spanning residues 28–236 (APGPAPGRAT…RPRLRRLHQR (209 aa)) is cleaved from the precursor. A glycan (N-linked (GlcNAc...) asparagine) is linked at Asn-94. A Cysteine switch motif is present at residues 202–209 (STCGVQVY). Zn(2+) is bound at residue Cys-204. Positions 242–452 (KWVETLVVAD…GWGLCLDDPP (211 aa)) constitute a Peptidase M12B domain. Intrachain disulfides connect Cys-318-Cys-372, Cys-347-Cys-354, Cys-366-Cys-447, Cys-405-Cys-431, Cys-474-Cys-497, Cys-485-Cys-503, Cys-492-Cys-522, Cys-516-Cys-527, Cys-550-Cys-587, Cys-554-Cys-592, and Cys-565-Cys-577. Residue His-388 coordinates Zn(2+). Glu-389 is a catalytic residue. Residues His-392 and His-398 each coordinate Zn(2+). One can recognise a Disintegrin domain in the interval 462–537 (VPPGVLYDVS…VPVGFRPEAV (76 aa)). In terms of domain architecture, TSP type-1 1 spans 538–593 (DGGWSGWSAWSICSRSCGMGVQSAERQCTQPTPKYKGRYCVGERKRFRLCNLQACP). N-linked (GlcNAc...) asparagine glycans are attached at residues Asn-693 and Asn-778. The segment at 698 to 809 (HTVSGTFEEA…PGVHYEYTIH (112 aa)) is spacer. TSP type-1 domains are found at residues 821–880 (PVFS…QPCP), 881–940 (ARWW…NRHV), and 942–995 (CPAT…PLCR). Disordered regions lie at residues 1024-1043 (HHLA…TMGN), 1080-1257 (PSEE…SPDV), and 1344-1396 (LGHM…PLAP). The segment covering 1182–1205 (DGLQTPATPESQNDFPVGKDSQSQ) has biased composition (polar residues). A compositionally biased stretch (basic and acidic residues) spans 1210–1226 (WRDRTNEVFKDDEEPKG). The span at 1360–1375 (PESLSPEVPLSSRLLS) shows a compositional bias: low complexity. 4 consecutive TSP type-1 domains span residues 1411-1459 (RNAG…RRCH), 1462-1522 (PCAT…QPCL), 1523-1567 (SWYT…PCNT), and 1569-1629 (PCTQ…EDCE). Positions 1632–1672 (EPPRCERDRLSFGFCETLRLLGRCQLPTIRTQCCRSCSPPS) constitute a PLAC domain. Positions 1666-1686 (RSCSPPSHGAPSRGHQRVARR) are disordered.

In terms of assembly, interacts with COMP. Zn(2+) is required as a cofactor. Post-translationally, N-glycosylated. Can be O-fucosylated by POFUT2 on a serine or a threonine residue found within the consensus sequence C1-X(2)-(S/T)-C2-G of the TSP type-1 repeat domains where C1 and C2 are the first and second cysteine residue of the repeat, respectively. Fucosylated repeats can then be further glycosylated by the addition of a beta-1,3-glucose residue by the glucosyltransferase, B3GALTL. Fucosylation mediates the efficient secretion of ADAMTS family members. Can also be C-glycosylated with one or two mannose molecules on tryptophan residues within the consensus sequence W-X-X-W of the TPRs. N- and C-glycosylations can also facilitate secretion. O-glycosylated proteoglycan; contains chondroitin sulfate. In terms of processing, may be cleaved by a furin endopeptidase. The precursor is sequentially processed. As to expression, expressed in heart, brain, placenta, lung, liver, skeletal muscle, kidney and pancreas. Detected in meniscus, bone, tendon, cartilage, synovium, fat and ligaments.

It is found in the secreted. It localises to the extracellular space. Its subcellular location is the extracellular matrix. In terms of biological role, metalloprotease. Was previously shown to degrade COMP. However, a later study found no activity against COMP. The protein is A disintegrin and metalloproteinase with thrombospondin motifs 7 (ADAMTS7) of Homo sapiens (Human).